Reading from the N-terminus, the 218-residue chain is Adenylate kinase (218 aa).

ATP is bound at residue 10–15 (GAGKGT). The segment at 30–59 (STGDMLRAAINEGTPLGLEAKKVMDAGKLV) is NMP. AMP is bound by residues Thr-31, Arg-36, 57-59 (KLV), 85-88 (GFPR), and Gln-92. Residues 122-159 (GRRVHPASGRTYHVLFNPPAKEGVDDITGDPLVQREDD) form an LID region. Residues Arg-123 and 132–133 (TY) contribute to the ATP site. 2 residues coordinate AMP: Arg-156 and Arg-167. Gly-203 is an ATP binding site.

The protein belongs to the adenylate kinase family. As to quaternary structure, monomer.

The protein resides in the cytoplasm. The catalysed reaction is AMP + ATP = 2 ADP. Its pathway is purine metabolism; AMP biosynthesis via salvage pathway; AMP from ADP: step 1/1. Catalyzes the reversible transfer of the terminal phosphate group between ATP and AMP. Plays an important role in cellular energy homeostasis and in adenine nucleotide metabolism. This is Adenylate kinase from Chlorobium phaeobacteroides (strain BS1).